The sequence spans 1363 residues: Neurexin-1 (1363 aa).

Residues 1–1287 (SKRRDMTVFS…EVIRESSSTT (1287 aa)) lie on the Extracellular side of the membrane. N-linked (GlcNAc...) asparagine glycosylation is present at asparagine 49. One can recognise an EGF-like 1 domain in the interval 67–105 (QSRLCAREDVCLNGGVCSVLNDQAVCDCSQTGFRGKDCS). 3 cysteine pairs are disulfide-bonded: cysteine 71-cysteine 83, cysteine 77-cysteine 92, and cysteine 94-cysteine 104. 2 Laminin G-like domains span residues 132–329 (IATF…AFKC) and 336–528 (DPIT…KPSC). Ca(2+)-binding residues include aspartate 178, leucine 195, and methionine 263. 5 disulfides stabilise this stretch: cysteine 293-cysteine 329, cysteine 499-cysteine 528, cysteine 536-cysteine 547, cysteine 541-cysteine 556, and cysteine 558-cysteine 568. Positions 532–569 (TAKPCLSNPCKNNGVCRDGWNRYVCDCSGTGYLGRSCE) constitute an EGF-like 2 domain. 2 Laminin G-like domains span residues 574 to 747 (ILSY…IDYC) and 761 to 936 (DPVT…ERGC). Asparagine 646 carries an N-linked (GlcNAc...) asparagine glycan. 4 disulfide bridges follow: cysteine 908/cysteine 936, cysteine 943/cysteine 954, cysteine 948/cysteine 963, and cysteine 965/cysteine 975. The EGF-like 3 domain maps to 939-976 (PSTTCQEDSCANQGVCLQQWDGFSCDCSMTSFSGPLCN). Positions 982–1180 (YIFSKGGGQI…DANIVIEGNV (199 aa)) constitute a Laminin G-like 5 domain. An N-linked (GlcNAc...) asparagine glycan is attached at asparagine 1079. Residues 1244–1280 (CPSDDEDIDPCEPSSGGLANPTRAGGGREYPGSSEVI) are disordered. A helical membrane pass occupies residues 1288–1308 (GMVVGIVAAAALCILILLYAM). The Cytoplasmic portion of the chain corresponds to 1309–1363 (YKYRNRDEGSYHVDESRNYISNSAQSNGAVIKEKQPNSAKSSNKNKKNKDKEYYV). Residues 1330–1363 (NSAQSNGAVIKEKQPNSAKSSNKNKKNKDKEYYV) are disordered.

It belongs to the neurexin family. The cytoplasmic C-terminal region binds to CASK. The laminin G-like domain 1 binds to NXPH1. Specific isoforms bind to alpha-dystroglycan and to alpha-latrotoxin. N- and O-glycosylated.

The protein resides in the membrane. Neuronal cell surface protein that may be involved in cell recognition and cell adhesion. May mediate intracellular signaling. This chain is Neurexin-1 (NRXN1), found in Gallus gallus (Chicken).